We begin with the raw amino-acid sequence, 367 residues long: Probable trehalose-phosphate phosphatase 4 (367 aa).

It belongs to the trehalose phosphatase family. A divalent metal cation is required as a cofactor.

It carries out the reaction alpha,alpha-trehalose 6-phosphate + H2O = alpha,alpha-trehalose + phosphate. It participates in glycan biosynthesis; trehalose biosynthesis. In terms of biological role, removes the phosphate from trehalose 6-phosphate to produce free trehalose. Trehalose accumulation in plant may improve abiotic stress tolerance. In Oryza sativa subsp. japonica (Rice), this protein is Probable trehalose-phosphate phosphatase 4 (TPP4).